The following is a 423-amino-acid chain: MLDLRFVRDNVDKIDMMLRNRRMDLSLAPLIELDTQRRRILREVEELKFRRNKASEEISNLKREKKDSSLLIEEMKEVSRRVKTLDQELTVIEEHFRDFLLLIPNMPHESVPVGADEKDNPVAKTWGSKPELDFEPKPHWEIGEALGILDFERAAKIAGARFALYWKMGAALERALIAFMLDIHTKRHGYTEVLPPFIVNSTSLLGTGQLPKFKEDLFKLEDRDFYLVPTAEVPVTNIHMNETLEESELPKLYTAFTPCFRSEAGSYGKDTRGLIRQHQFNKVELVKLVKPESSYEELEKLLLDAERILQELGLHYRVVTLCTGDMGFSSAKTYDIEVWLPGQNTYREISSCSNFEDFQARRANIRFRRKGQSKTEFVHTLNGSGLAVGRTLVAILENGQQADGSVSIPPALRPYLGNIERID.

230–232 (TAE) is an L-serine binding site. 261 to 263 (RSE) is a binding site for ATP. Glu284 is a binding site for L-serine. 348 to 351 (EISS) serves as a coordination point for ATP. L-serine is bound at residue Ser384.

This sequence belongs to the class-II aminoacyl-tRNA synthetase family. Type-1 seryl-tRNA synthetase subfamily. As to quaternary structure, homodimer. The tRNA molecule binds across the dimer.

It localises to the cytoplasm. The enzyme catalyses tRNA(Ser) + L-serine + ATP = L-seryl-tRNA(Ser) + AMP + diphosphate + H(+). It carries out the reaction tRNA(Sec) + L-serine + ATP = L-seryl-tRNA(Sec) + AMP + diphosphate + H(+). The protein operates within aminoacyl-tRNA biosynthesis; selenocysteinyl-tRNA(Sec) biosynthesis; L-seryl-tRNA(Sec) from L-serine and tRNA(Sec): step 1/1. Its function is as follows. Catalyzes the attachment of serine to tRNA(Ser). Is also able to aminoacylate tRNA(Sec) with serine, to form the misacylated tRNA L-seryl-tRNA(Sec), which will be further converted into selenocysteinyl-tRNA(Sec). The polypeptide is Serine--tRNA ligase (Syntrophobacter fumaroxidans (strain DSM 10017 / MPOB)).